The following is a 614-amino-acid chain: Probable glutamate--tRNA ligase, cytoplasmic (614 aa).

130-132 (RFA) provides a ligand contact to L-glutamate. Positions 135 to 144 (PSGCLHIGHL) match the 'HIGH' region motif. Residue H140 participates in ATP binding. Residues D166, 303–307 (YDFVC), and R321 contribute to the L-glutamate site. Residues E324 and 359–363 (VLSKR) each bind ATP. Positions 359–363 (VLSKR) match the 'KMSKS' region motif.

This sequence belongs to the class-I aminoacyl-tRNA synthetase family. Glutamate--tRNA ligase type 2 subfamily.

Its subcellular location is the cytoplasm. The catalysed reaction is tRNA(Glu) + L-glutamate + ATP = L-glutamyl-tRNA(Glu) + AMP + diphosphate. The protein is Probable glutamate--tRNA ligase, cytoplasmic of Vairimorpha ceranae (strain BRL01) (Microsporidian parasite).